We begin with the raw amino-acid sequence, 324 residues long: NADH-ubiquinone oxidoreductase chain 1 (324 aa).

Helical transmembrane passes span 9 to 29 (LINPLAYIVPVLLAVAFLTLL), 76 to 96 (LFLVTPMLALTLAMTLWAPMP), 106 to 126 (LGVLFILALSSLAVYSILGSG), 146 to 166 (ISYEVSLGLILRSIIIFWGGY), 177 to 197 (ALWLLLPACPLAAMWYISTLA), 228 to 248 (LLFLAEYANILLMNTLSAILF), 259 to 279 (ELTTINLMTKAALLSVVFLWV), and 299 to 319 (FLPLTLALVLWHTALPIAFAG).

Belongs to the complex I subunit 1 family.

It is found in the mitochondrion inner membrane. The catalysed reaction is a ubiquinone + NADH + 5 H(+)(in) = a ubiquinol + NAD(+) + 4 H(+)(out). Functionally, core subunit of the mitochondrial membrane respiratory chain NADH dehydrogenase (Complex I) that is believed to belong to the minimal assembly required for catalysis. Complex I functions in the transfer of electrons from NADH to the respiratory chain. The immediate electron acceptor for the enzyme is believed to be ubiquinone. This is NADH-ubiquinone oxidoreductase chain 1 (MT-ND1) from Formosania lacustris (Oriental stream loach).